Here is a 348-residue protein sequence, read N- to C-terminus: Anthranilate phosphoribosyltransferase (348 aa).

5-phospho-alpha-D-ribose 1-diphosphate-binding positions include Gly-87, Gly-90–Asp-91, Thr-95, Asn-97–Thr-100, Lys-115–Gly-123, and Ser-127. Gly-87 provides a ligand contact to anthranilate. Ser-99 provides a ligand contact to Mg(2+). Anthranilate is bound at residue Asn-118. Arg-173 is a binding site for anthranilate. Residues Asp-232 and Glu-233 each coordinate Mg(2+).

This sequence belongs to the anthranilate phosphoribosyltransferase family. As to quaternary structure, homodimer. Mg(2+) is required as a cofactor.

The catalysed reaction is N-(5-phospho-beta-D-ribosyl)anthranilate + diphosphate = 5-phospho-alpha-D-ribose 1-diphosphate + anthranilate. Its pathway is amino-acid biosynthesis; L-tryptophan biosynthesis; L-tryptophan from chorismate: step 2/5. Its function is as follows. Catalyzes the transfer of the phosphoribosyl group of 5-phosphorylribose-1-pyrophosphate (PRPP) to anthranilate to yield N-(5'-phosphoribosyl)-anthranilate (PRA). This chain is Anthranilate phosphoribosyltransferase, found in Synechococcus sp. (strain CC9311).